Consider the following 118-residue polypeptide: Large ribosomal subunit protein uL18 (118 aa).

The segment at 1–22 is disordered; it reads MISKPDKNKLRQKRHRRVRGKL. Over residues 10–20 the composition is skewed to basic residues; it reads LRQKRHRRVRG.

It belongs to the universal ribosomal protein uL18 family. Part of the 50S ribosomal subunit; part of the 5S rRNA/L5/L18/L25 subcomplex. Contacts the 5S and 23S rRNAs.

In terms of biological role, this is one of the proteins that bind and probably mediate the attachment of the 5S RNA into the large ribosomal subunit, where it forms part of the central protuberance. The sequence is that of Large ribosomal subunit protein uL18 from Streptococcus thermophilus (strain ATCC BAA-491 / LMD-9).